The primary structure comprises 185 residues: Large ribosomal subunit protein uL5 (185 aa).

It belongs to the universal ribosomal protein uL5 family. As to quaternary structure, part of the 50S ribosomal subunit; part of the 5S rRNA/L5/L18/L25 subcomplex. Contacts the 5S rRNA and the P site tRNA. Forms a bridge to the 30S subunit in the 70S ribosome.

This is one of the proteins that bind and probably mediate the attachment of the 5S RNA into the large ribosomal subunit, where it forms part of the central protuberance. In the 70S ribosome it contacts protein S13 of the 30S subunit (bridge B1b), connecting the 2 subunits; this bridge is implicated in subunit movement. Contacts the P site tRNA; the 5S rRNA and some of its associated proteins might help stabilize positioning of ribosome-bound tRNAs. The chain is Large ribosomal subunit protein uL5 from Brucella abortus (strain 2308).